A 420-amino-acid chain; its full sequence is Gamma-glutamyl phosphate reductase (420 aa).

The protein belongs to the gamma-glutamyl phosphate reductase family.

It is found in the cytoplasm. The catalysed reaction is L-glutamate 5-semialdehyde + phosphate + NADP(+) = L-glutamyl 5-phosphate + NADPH + H(+). The protein operates within amino-acid biosynthesis; L-proline biosynthesis; L-glutamate 5-semialdehyde from L-glutamate: step 2/2. In terms of biological role, catalyzes the NADPH-dependent reduction of L-glutamate 5-phosphate into L-glutamate 5-semialdehyde and phosphate. The product spontaneously undergoes cyclization to form 1-pyrroline-5-carboxylate. This chain is Gamma-glutamyl phosphate reductase, found in Alkalilimnicola ehrlichii (strain ATCC BAA-1101 / DSM 17681 / MLHE-1).